Reading from the N-terminus, the 248-residue chain is Ubiquinone biosynthesis O-methyltransferase (248 aa).

S-adenosyl-L-methionine-binding residues include Arg-41, Gly-72, Asp-93, and Met-136.

Belongs to the methyltransferase superfamily. UbiG/COQ3 family.

The enzyme catalyses a 3-demethylubiquinol + S-adenosyl-L-methionine = a ubiquinol + S-adenosyl-L-homocysteine + H(+). It catalyses the reaction a 3-(all-trans-polyprenyl)benzene-1,2-diol + S-adenosyl-L-methionine = a 2-methoxy-6-(all-trans-polyprenyl)phenol + S-adenosyl-L-homocysteine + H(+). The protein operates within cofactor biosynthesis; ubiquinone biosynthesis. Functionally, O-methyltransferase that catalyzes the 2 O-methylation steps in the ubiquinone biosynthetic pathway. The chain is Ubiquinone biosynthesis O-methyltransferase from Sinorhizobium medicae (strain WSM419) (Ensifer medicae).